The primary structure comprises 261 residues: Sepiapterin reductase (261 aa).

Met-1 carries the post-translational modification N-acetylmethionine. An NADP(+)-binding site is contributed by 14 to 20 (GASRGFG). A Phosphoserine modification is found at Ser-32. Residues 42–43 (RN) and 69–70 (DL) contribute to the NADP(+) site. At Ser-103 the chain carries Phosphoserine. Residues 157–158 (SL) and Tyr-170 contribute to the substrate site. Lys-174 is a binding site for NADP(+). A substrate-binding site is contributed by Gly-199. Residue 201-206 (LDTDMQ) participates in NADP(+) binding. Phosphoserine; by CaMK2; in vitro is present on Ser-213. Asp-257 lines the substrate pocket.

It belongs to the sepiapterin reductase family. In terms of assembly, homodimer. In vitro phosphorylation of Ser-213 by CaMK2 does not change kinetic parameters.

Its subcellular location is the cytoplasm. The enzyme catalyses L-erythro-7,8-dihydrobiopterin + NADP(+) = L-sepiapterin + NADPH + H(+). It carries out the reaction (6R)-L-erythro-5,6,7,8-tetrahydrobiopterin + 2 NADP(+) = 6-pyruvoyl-5,6,7,8-tetrahydropterin + 2 NADPH + 2 H(+). Its function is as follows. Catalyzes the final one or two reductions in tetra-hydrobiopterin biosynthesis to form 5,6,7,8-tetrahydrobiopterin. This Homo sapiens (Human) protein is Sepiapterin reductase (SPR).